The chain runs to 1873 residues: SAGA complex subunit Spt20 (1873 aa).

Belongs to the SPT20 family. In terms of assembly, component of the Spt-Ada-Gcn5 acetyltransferase (SAGA) complex consisting of wda/Taf5L, Saf6, Taf9, Taf10b, Taf12, Ada1, Spt3, Spt7, Spt20, Sf3b3, Sf3b5, Nipped-A/Tra1, a histone acetyltransferase (HAT) module made up of Gcn5, Ada2b (Isoform B), Ada3 and Sgf29, and a deubiquitinase (DUB) module made up of not/nonstop, Sgf11 and e(y)2 tethered to SAGA by Atxn7.

It localises to the nucleus. Its function is as follows. Component of the transcription regulatory complex SAGA, a multiprotein complex that activates transcription by remodeling chromatin and mediating histone acetylation and deubiquitination. The SAGA complex predominantly acetylates histone H3. The protein is SAGA complex subunit Spt20 of Drosophila melanogaster (Fruit fly).